We begin with the raw amino-acid sequence, 61 residues long: Large ribosomal subunit protein uL30 (61 aa).

The protein belongs to the universal ribosomal protein uL30 family. As to quaternary structure, part of the 50S ribosomal subunit.

This Thermobifida fusca (strain YX) protein is Large ribosomal subunit protein uL30.